The following is a 164-amino-acid chain: Polygalacturonase (164 aa).

This sequence belongs to the glycosyl hydrolase 28 family.

The protein localises to the secreted. Its subcellular location is the cell wall. It catalyses the reaction (1,4-alpha-D-galacturonosyl)n+m + H2O = (1,4-alpha-D-galacturonosyl)n + (1,4-alpha-D-galacturonosyl)m.. This chain is Polygalacturonase, found in Cupressus sempervirens (Italian cypress).